The following is a 204-amino-acid chain: Translation initiation factor IF-3 (204 aa).

The tract at residues 169-204 (VPKAAPKRDSGRSESAQEAPTARSAEASRPEAPANA) is disordered.

It belongs to the IF-3 family. In terms of assembly, monomer.

The protein resides in the cytoplasm. Functionally, IF-3 binds to the 30S ribosomal subunit and shifts the equilibrium between 70S ribosomes and their 50S and 30S subunits in favor of the free subunits, thus enhancing the availability of 30S subunits on which protein synthesis initiation begins. This Deinococcus geothermalis (strain DSM 11300 / CIP 105573 / AG-3a) protein is Translation initiation factor IF-3.